The chain runs to 594 residues: Adenine deaminase 1 (594 aa).

Belongs to the metallo-dependent hydrolases superfamily. Adenine deaminase family. Mn(2+) serves as cofactor.

It catalyses the reaction adenine + H2O + H(+) = hypoxanthine + NH4(+). The sequence is that of Adenine deaminase 1 from Jannaschia sp. (strain CCS1).